We begin with the raw amino-acid sequence, 439 residues long: Histidinol dehydrogenase (439 aa).

Residues tyrosine 132, glutamine 194, and asparagine 217 each coordinate NAD(+). Serine 244, glutamine 266, and histidine 269 together coordinate substrate. Zn(2+) contacts are provided by glutamine 266 and histidine 269. Catalysis depends on proton acceptor residues glutamate 335 and histidine 336. Positions 336, 369, 423, and 428 each coordinate substrate. Aspartate 369 is a Zn(2+) binding site. A Zn(2+)-binding site is contributed by histidine 428.

It belongs to the histidinol dehydrogenase family. Zn(2+) is required as a cofactor.

It catalyses the reaction L-histidinol + 2 NAD(+) + H2O = L-histidine + 2 NADH + 3 H(+). It functions in the pathway amino-acid biosynthesis; L-histidine biosynthesis; L-histidine from 5-phospho-alpha-D-ribose 1-diphosphate: step 9/9. In terms of biological role, catalyzes the sequential NAD-dependent oxidations of L-histidinol to L-histidinaldehyde and then to L-histidine. This is Histidinol dehydrogenase (his2) from Schizosaccharomyces pombe (strain 972 / ATCC 24843) (Fission yeast).